We begin with the raw amino-acid sequence, 693 residues long: Polyribonucleotide nucleotidyltransferase (693 aa).

Residues aspartate 490 and aspartate 496 each coordinate Mg(2+). In terms of domain architecture, KH spans 557–617; the sequence is PRISWFFIDP…EKVQEAVEYI (61 aa). Residues 627–691 enclose the S1 motif domain; that stretch reads GDLYTGKVTR…DAGRLQFRRL (65 aa).

This sequence belongs to the polyribonucleotide nucleotidyltransferase family. Mg(2+) serves as cofactor.

The protein resides in the cytoplasm. It catalyses the reaction RNA(n+1) + phosphate = RNA(n) + a ribonucleoside 5'-diphosphate. Its function is as follows. Involved in mRNA degradation. Catalyzes the phosphorolysis of single-stranded polyribonucleotides processively in the 3'- to 5'-direction. The chain is Polyribonucleotide nucleotidyltransferase from Fervidobacterium nodosum (strain ATCC 35602 / DSM 5306 / Rt17-B1).